The following is a 244-amino-acid chain: Robin (244 aa).

In Acanthamoeba polyphaga (Amoeba), this protein is Robin.